The chain runs to 535 residues: Sodium/hydrogen exchanger 1 (535 aa).

Residues 1-21 (MGMEVAAARLGALYTTSDYAS) are Cytoplasmic-facing. The chain crosses the membrane as a helical span at residues 22–42 (VVSINLFVALLCACIVLGHLL). At 43 to 46 (EENR) the chain is on the vacuolar side. Residues 47–67 (WVNESITALIIGLCTGVVILL) traverse the membrane as a helical segment. Residues 68–75 (MTKGKSSH) lie on the Cytoplasmic side of the membrane. The helical transmembrane segment at 76–96 (LFVFSEDLFFIYLLPPIIFNA) threads the bilayer. Residues 97-114 (GFQVKKKQFFRNFMTITL) are Vacuolar-facing. The helical transmembrane segment at 115-135 (FGAVGTMISFFTISIAAIAIF) threads the bilayer. Residues 136-137 (SR) lie on the Cytoplasmic side of the membrane. A helical membrane pass occupies residues 138-158 (MNIGTLDVGDFLAIGAIFSAT). The Vacuolar portion of the chain corresponds to 159 to 173 (DSVCTLQVLNQDETP). Residues 174 to 194 (FLYSLVFGEGVVNDATSIVLF) form a helical membrane-spanning segment. At 195–218 (NALQNFDLVHIDAAVVLKFLGNFF) the chain is on the cytoplasmic side. Residues 219 to 239 (YLFLSSTFLGVFAGLLSAYII) form a helical membrane-spanning segment. The Vacuolar portion of the chain corresponds to 240–264 (KKLYIGRHSTDREVALMMLMAYLSY). Residues 265–285 (MLAELLDLSGILTVFFCGIVM) form a helical membrane-spanning segment. At 286–304 (SHYTWHNVTESSRVTTKHA) the chain is on the cytoplasmic side. The helical transmembrane segment at 305 to 325 (FATLSFIAETFLFLYVGMDAL) threads the bilayer. At 326-344 (DIEKWEFASDRPGKSIGIS) the chain is on the vacuolar side. A helical membrane pass occupies residues 345–365 (SILLGLVLIGRAAFVFPLSFL). Residues 366 to 381 (SNLTKKAPNEKITWRQ) are Cytoplasmic-facing. Residues 382–402 (QVVIWWAGLMRGAVSIALAYN) form a helical membrane-spanning segment. The Vacuolar segment spans residues 403–415 (KFTRSGHTQLHGN). The chain crosses the membrane as a helical span at residues 416-436 (AIMITSTITVVLFSTMVFGMM). At 437–535 (TKPLIRLLLP…SPTEQSHGGR (99 aa)) the chain is on the cytoplasmic side. The interval 452 to 478 (VTSEPSSPKSLHSPLLTSMQGSDLEST) is disordered. Over residues 454-469 (SEPSSPKSLHSPLLTS) the composition is skewed to low complexity.

It belongs to the monovalent cation:proton antiporter 1 (CPA1) transporter (TC 2.A.36) family.

Its subcellular location is the vacuole membrane. It catalyses the reaction Na(+)(in) + H(+)(out) = Na(+)(out) + H(+)(in). It carries out the reaction K(+)(in) + H(+)(out) = K(+)(out) + H(+)(in). Its function is as follows. Vacuolar antiporter that acts in low affinity electroneutral exchange of protons H(+) for cations such as Na(+) or K(+) across membranes. Plays important roles in the transport of Na(+) and K(+) accumulated in the cytoplasm into vacuoles, and is involved in salt stress tolerance. In Oryza sativa subsp. japonica (Rice), this protein is Sodium/hydrogen exchanger 1.